Here is a 225-residue protein sequence, read N- to C-terminus: Probable CDP-diacylglycerol--inositol 3-phosphatidyltransferase 2 (225 aa).

A run of 2 helical transmembrane segments spans residues 6–26 (PATL…RVLL) and 29–49 (IAFS…FFSF). The Mg(2+) site is built by aspartate 52 and aspartate 55. Residues glycine 56, arginine 60, and serine 66 each coordinate a CDP-1,2-diacyl-sn-glycerol. The Mg(2+) site is built by aspartate 73 and aspartate 77. Aspartate 77 acts as the Proton acceptor in catalysis. The next 3 helical transmembrane spans lie at 84-104 (LLVI…LLAL), 143-163 (MFMG…LLIA), and 184-204 (LSLL…INVI).

This sequence belongs to the CDP-alcohol phosphatidyltransferase class-I family. Requires Mg(2+) as cofactor. It depends on Mn(2+) as a cofactor.

It is found in the membrane. The catalysed reaction is a CDP-1,2-diacyl-sn-glycerol + myo-inositol = a 1,2-diacyl-sn-glycero-3-phospho-(1D-myo-inositol) + CMP + H(+). Catalyzes the biosynthesis of phosphatidylinositol (PtdIns) as well as PtdIns:inositol exchange reaction. May thus act to reduce an excessive cellular PtdIns content. The exchange activity is due to the reverse reaction of PtdIns synthase and is dependent on CMP, which is tightly bound to the enzyme. The sequence is that of Probable CDP-diacylglycerol--inositol 3-phosphatidyltransferase 2 (PIS2) from Arabidopsis thaliana (Mouse-ear cress).